Consider the following 159-residue polypeptide: MKFRVVAVGKIKEKYLIRGIEEYQKRLRPYTGLEITEVKDSVLPNKLYQAEIEKVLIEEENRIKSKLSSRDYIIALDSEGSQFTSENFAQQIENLTLEGINQFTFIIGGTLGLSNSLKKEANMLLSFSKFTFPHQLMRLILTEQLYRAIKIIHNEPYHY.

S-adenosyl-L-methionine contacts are provided by Leu76 and Gly108.

Belongs to the RNA methyltransferase RlmH family. Homodimer.

The protein localises to the cytoplasm. It carries out the reaction pseudouridine(1915) in 23S rRNA + S-adenosyl-L-methionine = N(3)-methylpseudouridine(1915) in 23S rRNA + S-adenosyl-L-homocysteine + H(+). In terms of biological role, specifically methylates the pseudouridine at position 1915 (m3Psi1915) in 23S rRNA. The polypeptide is Ribosomal RNA large subunit methyltransferase H (Natranaerobius thermophilus (strain ATCC BAA-1301 / DSM 18059 / JW/NM-WN-LF)).